The primary structure comprises 794 residues: Zinc finger protein 148 (794 aa).

Lysine 6 is covalently cross-linked (Glycyl lysine isopeptide (Lys-Gly) (interchain with G-Cter in SUMO2)). Serine 51 carries the post-translational modification Phosphoserine. Residues lysine 88, lysine 115, and lysine 132 each participate in a glycyl lysine isopeptide (Lys-Gly) (interchain with G-Cter in SUMO2) cross-link. The C2H2-type 1 zinc finger occupies 171–193 (HVCEHCNAAFRTNYHLQRHVFIH). Threonine 194 is modified (phosphothreonine). C2H2-type zinc fingers lie at residues 199-221 (FQCSQCDMRFIQKYLLQRHEKIH) and 227-249 (FRCDECGMRFIQKYHMERHKRTH). Serine 250 bears the Phosphoserine mark. The segment at 255-278 (YQCEYCLQYFSRTDRVLKHKRMCH) adopts a C2H2-type 4 zinc-finger fold. A Glycyl lysine isopeptide (Lys-Gly) (interchain with G-Cter in SUMO2) cross-link involves residue lysine 291. The tract at residues 298–336 (EEDSGFSTSPKDNSLPKKKRQKTEKKSSGMDKESALDKS) is disordered. Phosphoserine is present on residues serine 301 and serine 306. Lysine 308 participates in a covalent cross-link: Glycyl lysine isopeptide (Lys-Gly) (interchain with G-Cter in SUMO2). A compositionally biased stretch (basic and acidic residues) spans 321 to 336 (EKKSSGMDKESALDKS). Lysine 356 is covalently cross-linked (Glycyl lysine isopeptide (Lys-Gly) (interchain with G-Cter in SUMO1); alternate). A Glycyl lysine isopeptide (Lys-Gly) (interchain with G-Cter in SUMO2); alternate cross-link involves residue lysine 356. Residue lysine 402 forms a Glycyl lysine isopeptide (Lys-Gly) (interchain with G-Cter in SUMO2) linkage. The residue at position 412 (serine 412) is a Phosphoserine. Residues lysine 421 and lysine 424 each participate in a glycyl lysine isopeptide (Lys-Gly) (interchain with G-Cter in SUMO2) cross-link. Polar residues predominate over residues 574 to 588 (NSSEVPEVTPSENVG). Residues 574 to 599 (NSSEVPEVTPSENVGSSSQASSSDKA) form a disordered region. An N6-acetyllysine modification is found at lysine 607. A phosphoserine mark is found at serine 665 and serine 784.

Belongs to the krueppel C2H2-type zinc-finger protein family. In terms of assembly, interacts with HNRNPDL. Interacts with the 5FMC complex; the interaction requires association with CHTOP. Interacts with CAVIN1. Post-translationally, sumoylated with SUMO2. Desumoylated by SENP3, resulting in the stimulation of transcription of its target genes.

Its subcellular location is the nucleus. Its function is as follows. Involved in transcriptional regulation. Represses the transcription of a number of genes including gastrin, stromelysin and enolase. Binds to the G-rich box in the enhancer region of these genes. In Pongo abelii (Sumatran orangutan), this protein is Zinc finger protein 148 (ZNF148).